The primary structure comprises 355 residues: Anthranilate phosphoribosyltransferase (355 aa).

5-phospho-alpha-D-ribose 1-diphosphate is bound by residues glycine 102, 105 to 106, serine 110, 112 to 115, 130 to 138, and serine 142; these read GD, NIST, and KHGNRSVSS. Anthranilate is bound at residue glycine 102. Serine 114 is a Mg(2+) binding site. Asparagine 133 contacts anthranilate. Residue arginine 188 coordinates anthranilate. Mg(2+)-binding residues include aspartate 246 and glutamate 247.

Belongs to the anthranilate phosphoribosyltransferase family. Homodimer. Mg(2+) serves as cofactor.

It catalyses the reaction N-(5-phospho-beta-D-ribosyl)anthranilate + diphosphate = 5-phospho-alpha-D-ribose 1-diphosphate + anthranilate. It participates in amino-acid biosynthesis; L-tryptophan biosynthesis; L-tryptophan from chorismate: step 2/5. In terms of biological role, catalyzes the transfer of the phosphoribosyl group of 5-phosphorylribose-1-pyrophosphate (PRPP) to anthranilate to yield N-(5'-phosphoribosyl)-anthranilate (PRA). The chain is Anthranilate phosphoribosyltransferase from Pectobacterium atrosepticum (strain SCRI 1043 / ATCC BAA-672) (Erwinia carotovora subsp. atroseptica).